The following is a 530-amino-acid chain: uncharacterized protein (530 aa).

Composition is skewed to basic and acidic residues over residues 1-11 and 28-38; these read MTALNDTERAV and PRSEETASERP. The segment at 1–38 is disordered; that stretch reads MTALNDTERAVRNWTAGRPHRPAPMRPPRSEETASERP. Residues 1–50 lie on the Cytoplasmic side of the membrane; that stretch reads MTALNDTERAVRNWTAGRPHRPAPMRPPRSEETASERPSRYYPTWLPSRS. The chain crosses the membrane as a helical span at residues 51–71; the sequence is FIAAVIAIGGMQLLATMDSTV. At 72–91 the chain is on the extracellular side; that stretch reads AIVALPKIQNELSLSDAGRS. The chain crosses the membrane as a helical span at residues 92-112; it reads WVITAYVLTFGGLMLLGGRLG. Residues 113-119 lie on the Cytoplasmic side of the membrane; sequence DTIGRKR. A helical transmembrane segment spans residues 120–140; it reads TFIVGVALFTISSVLCAVAWD. Residues 141-150 lie on the Extracellular side of the membrane; it reads EATLVIARLS. The chain crosses the membrane as a helical span at residues 151-171; sequence QGVGSAIASPTGLALVATTFP. The Cytoplasmic segment spans residues 172–180; it reads KGPARNAAT. A helical membrane pass occupies residues 181–201; that stretch reads AVFAAMTAIGSVMGLVVGGAL. Residues 202–203 lie on the Extracellular side of the membrane; it reads TE. The chain crosses the membrane as a helical span at residues 204 to 224; sequence VSWRWAFLVNVPIGLVMIYLA. Residues 225–239 lie on the Cytoplasmic side of the membrane; it reads RTALRETNKERMKLD. Residues 240–260 form a helical membrane-spanning segment; sequence ATGAILATLACTAAVFAFSIG. Residues 261–266 are Extracellular-facing; sequence PEKGWM. The chain crosses the membrane as a helical span at residues 267–287; sequence SGITIGSGLVALAAAVAFVIV. The Cytoplasmic portion of the chain corresponds to 288-306; the sequence is ERTAENPVVPFHLFRDRNR. The helical transmembrane segment at 307-327 threads the bilayer; that stretch reads LVTFSAILLAGGVMFSLTVCI. Residues 328 to 343 lie on the Extracellular side of the membrane; sequence GLYVQDILGYSALRAG. Residues 344 to 364 traverse the membrane as a helical segment; that stretch reads VGFIPFVIAMGIGLGVSSQLV. Residues 365-370 lie on the Cytoplasmic side of the membrane; the sequence is SRFSPR. A helical transmembrane segment spans residues 371-391; the sequence is VLTIGGGYLLFGAMLYGSFFM. Residues 392–400 are Extracellular-facing; the sequence is HRGVPYFPN. Residues 401–421 traverse the membrane as a helical segment; the sequence is LVMPIVVGGIGIGMAVVPLTL. Residues 422-437 lie on the Cytoplasmic side of the membrane; it reads SAIAGVGFDQIGPVSA. The chain crosses the membrane as a helical span at residues 438-458; it reads IALMLQSLGGPLVLAVIQAVI. Residues 459–488 lie on the Extracellular side of the membrane; the sequence is TSRTLYLGGTTGPVKFMNDVQLAALDHAYT. The chain crosses the membrane as a helical span at residues 489–509; the sequence is YGLLWVAGAAIIVGGMALFIG. The Cytoplasmic portion of the chain corresponds to 510 to 530; that stretch reads YTPQQVAHAQEVKEAIDAGEL.

Belongs to the major facilitator superfamily.

It localises to the cell membrane. This is an uncharacterized protein from Mycobacterium tuberculosis (strain CDC 1551 / Oshkosh).